We begin with the raw amino-acid sequence, 1048 residues long: Probable inactive receptor kinase At5g10020 (1048 aa).

The signal sequence occupies residues 1 to 21 (MSHFLTFCFLSLLLLLHGANA). LRR repeat units lie at residues 100 to 120 (RLRN…PSLG), 124 to 146 (SLQH…ISEL), 148 to 169 (SLNH…GFRN), 172 to 194 (QLRS…FTEL), 196 to 217 (NVEF…PMEN), 224 to 246 (TLRH…ESIG), 250 to 272 (NLEI…GSQP), 273 to 294 (SLRI…ELLQ), 298 to 319 (PLLE…INSS), 320 to 342 (TLTM…FKSC), 365 to 387 (TPDV…TSAF), 389 to 411 (RLSV…WGDS), 412 to 433 (QFSV…SFFT), 436 to 457 (SLRS…RGSR), 469 to 491 (QMEL…IGTM), 493 to 516 (KIKV…NKLS), 517 to 539 (GLLF…LPSQ), and 540 to 560 (MVGF…DLRS). The helical transmembrane segment at 602–622 (IAIIVASVGAAIMILFVLFAY) threads the bilayer. Residues 696 to 733 (EQGAPATSAPTNLLDDYPAASGRKSSSGGSPLSSSPRF) form a disordered region. Over residues 716–733 (SGRKSSSGGSPLSSSPRF) the composition is skewed to low complexity. Ser744 bears the Phosphoserine mark. Positions 768-1045 (RAPAEVLGRS…IRQVLDHLTS (278 aa)) constitute a Protein kinase domain. Residues 774-782 (LGRSSHGTL) and Lys796 each bind ATP.

Belongs to the protein kinase superfamily.

It localises to the membrane. The chain is Probable inactive receptor kinase At5g10020 from Arabidopsis thaliana (Mouse-ear cress).